The primary structure comprises 320 residues: Ferrochelatase (320 aa).

2 residues coordinate Fe cation: histidine 194 and glutamate 275.

The protein belongs to the ferrochelatase family. Monomer.

It localises to the cytoplasm. It carries out the reaction heme b + 2 H(+) = protoporphyrin IX + Fe(2+). The protein operates within porphyrin-containing compound metabolism; protoheme biosynthesis; protoheme from protoporphyrin-IX: step 1/1. Catalyzes the ferrous insertion into protoporphyrin IX. The polypeptide is Ferrochelatase (Salmonella arizonae (strain ATCC BAA-731 / CDC346-86 / RSK2980)).